A 643-amino-acid chain; its full sequence is Phosphomethylpyrimidine synthase (643 aa).

Residues asparagine 248, methionine 277, tyrosine 306, histidine 342, 362–364 (SRG), 403–406 (DGLR), and glutamate 442 each bind substrate. Histidine 446 provides a ligand contact to Zn(2+). Substrate is bound at residue tyrosine 469. Histidine 510 is a Zn(2+) binding site. [4Fe-4S] cluster is bound by residues cysteine 590, cysteine 593, and cysteine 598.

It belongs to the ThiC family. As to quaternary structure, homodimer. The cofactor is [4Fe-4S] cluster.

The enzyme catalyses 5-amino-1-(5-phospho-beta-D-ribosyl)imidazole + S-adenosyl-L-methionine = 4-amino-2-methyl-5-(phosphooxymethyl)pyrimidine + CO + 5'-deoxyadenosine + formate + L-methionine + 3 H(+). Its pathway is cofactor biosynthesis; thiamine diphosphate biosynthesis. Functionally, catalyzes the synthesis of the hydroxymethylpyrimidine phosphate (HMP-P) moiety of thiamine from aminoimidazole ribotide (AIR) in a radical S-adenosyl-L-methionine (SAM)-dependent reaction. This is Phosphomethylpyrimidine synthase from Burkholderia ambifaria (strain ATCC BAA-244 / DSM 16087 / CCUG 44356 / LMG 19182 / AMMD) (Burkholderia cepacia (strain AMMD)).